Here is a 341-residue protein sequence, read N- to C-terminus: Methionine import ATP-binding protein MetN (341 aa).

In terms of domain architecture, ABC transporter spans 9–247 (ISVQKVNKEI…PRSSITEELF (239 aa)). 41 to 48 (GHSGSGKS) is an ATP binding site.

Belongs to the ABC transporter superfamily. Methionine importer (TC 3.A.1.24) family. The complex is composed of two ATP-binding proteins (MetN), two transmembrane proteins (MetI) and a solute-binding protein (MetQ).

It is found in the cell inner membrane. The catalysed reaction is L-methionine(out) + ATP + H2O = L-methionine(in) + ADP + phosphate + H(+). It carries out the reaction D-methionine(out) + ATP + H2O = D-methionine(in) + ADP + phosphate + H(+). Its function is as follows. Part of the ABC transporter complex MetNIQ involved in methionine import. Responsible for energy coupling to the transport system. The sequence is that of Methionine import ATP-binding protein MetN from Chlamydia caviae (strain ATCC VR-813 / DSM 19441 / 03DC25 / GPIC) (Chlamydophila caviae).